The following is a 168-amino-acid chain: Large ribosomal subunit protein uL10 (168 aa).

It belongs to the universal ribosomal protein uL10 family. As to quaternary structure, part of the ribosomal stalk of the 50S ribosomal subunit. The N-terminus interacts with L11 and the large rRNA to form the base of the stalk. The C-terminus forms an elongated spine to which L12 dimers bind in a sequential fashion forming a multimeric L10(L12)X complex.

In terms of biological role, forms part of the ribosomal stalk, playing a central role in the interaction of the ribosome with GTP-bound translation factors. The chain is Large ribosomal subunit protein uL10 from Levilactobacillus brevis (strain ATCC 367 / BCRC 12310 / CIP 105137 / JCM 1170 / LMG 11437 / NCIMB 947 / NCTC 947) (Lactobacillus brevis).